The chain runs to 313 residues: D-alanine--D-alanine ligase (313 aa).

An ATP-grasp domain is found at 108-308 (KLVWQQLGIP…YQELVVGVLA (201 aa)). 138-193 (VAKLGLPLFVKPASEGSSVAVIKVKSADALPAALIEAVKYDKIVVVEKSVEGGGEY) lines the ATP pocket. Mg(2+) contacts are provided by D262, E275, and N277.

The protein belongs to the D-alanine--D-alanine ligase family. The cofactor is Mg(2+). Requires Mn(2+) as cofactor.

The protein localises to the cytoplasm. It catalyses the reaction 2 D-alanine + ATP = D-alanyl-D-alanine + ADP + phosphate + H(+). It participates in cell wall biogenesis; peptidoglycan biosynthesis. Cell wall formation. This chain is D-alanine--D-alanine ligase, found in Paraburkholderia phytofirmans (strain DSM 17436 / LMG 22146 / PsJN) (Burkholderia phytofirmans).